The chain runs to 297 residues: T-cell leukemia homeobox protein 1 (297 aa).

The interval 153 to 174 is disordered; it reads DRFTGHPYQNRTPPKKKKPRTS. A DNA-binding region (homeobox) is located at residues 168-227; that stretch reads KKKPRTSFTRLQICELEKRFHRQKYLASAERAALAKALKMTDAQVKTWFQNRRTKWRRQT.

It localises to the nucleus. Seems to be involved in the development of cranial sensory innervation from peripheral ganglia. The sequence is that of T-cell leukemia homeobox protein 1 (TLX1) from Gallus gallus (Chicken).